The chain runs to 78 residues: Large ribosomal subunit protein bL28 (78 aa).

The tract at residues 1–20 is disordered; the sequence is MSRVCQVTGKGPVTGNNISH.

It belongs to the bacterial ribosomal protein bL28 family.

This is Large ribosomal subunit protein bL28 from Stutzerimonas stutzeri (strain A1501) (Pseudomonas stutzeri).